We begin with the raw amino-acid sequence, 127 residues long: Small ribosomal subunit protein uS11 (127 aa).

It belongs to the universal ribosomal protein uS11 family. As to quaternary structure, part of the 30S ribosomal subunit. Interacts with proteins S7 and S18. Binds to IF-3.

In terms of biological role, located on the platform of the 30S subunit, it bridges several disparate RNA helices of the 16S rRNA. Forms part of the Shine-Dalgarno cleft in the 70S ribosome. The sequence is that of Small ribosomal subunit protein uS11 from Rhodopirellula baltica (strain DSM 10527 / NCIMB 13988 / SH1).